Consider the following 420-residue polypeptide: POU domain, class 4, transcription factor 1 (420 aa).

A POU-IV box motif is present at residues 57 to 66 (RAEALAAVDI). Disordered regions lie at residues 94–117 (STVPLAHHHHHHHHHQALEPGDLL) and 132–200 (GGAG…XGHL). Residues 99–108 (AHHHHHHHHH) show a composition bias toward basic residues. Gly residues-rich tracts occupy residues 132–165 (GGAGAAGGGGAPTRPRGAGGPGGGGGPGGGGPGV) and 172–184 (PGGGGGGPGGGLL). Positions 261–338 (DSDTDPRELE…ILQAWLEEAE (78 aa)) constitute a POU-specific domain. A DNA-binding region (homeobox) is located at residues 356–415 (KKRKRTSIAAPEKRSLEAYFAVQPRPSSEKIAAIAEKLDLKKNVVRVWFCNQRQKQKRMK).

It belongs to the POU transcription factor family. Class-4 subfamily. In terms of assembly, interacts (via N-terminus) with RIT2; the interaction controls POU4F1 transactivation activity on some neuronal target genes. Isoform 1 interacts with POU4F2; this interaction inhibits both POU4F1 DNA-binding and transcriptional activities. Isoform 1 interacts (C-terminus) with ESR1 (via DNA-binding domain); this interaction decreases the estrogen receptor ESR1 transcriptional activity in a DNA- and ligand 17-beta-estradiol-independent manner. Detected in brain, spinal cord and dorsal root ganglion. Isoform 2 is detected in brain, spinal cord, dorsal root ganglion and spleen.

It localises to the nucleus. Its subcellular location is the cytoplasm. Functionally, multifunctional transcription factor with different regions mediating its different effects. Acts by binding (via its C-terminal domain) to sequences related to the consensus octamer motif 5'-ATGCAAAT-3' in the regulatory regions of its target genes. Regulates the expression of specific genes involved in differentiation and survival within a subset of neuronal lineages. It has been shown that activation of some of these genes requires its N-terminal domain, maybe through a neuronal-specific cofactor. Activates BCL2 expression and protects neuronal cells from apoptosis (via the N-terminal domain). Induces neuronal process outgrowth and the coordinate expression of genes encoding synaptic proteins. Exerts its major developmental effects in somatosensory neurons and in brainstem nuclei involved in motor control. Stimulates the binding affinity of the nuclear estrogene receptor ESR1 to DNA estrogen response element (ERE), and hence modulates ESR1-induced transcriptional activity. May positively regulate POU4F2 and POU4F3. Regulates dorsal root ganglion sensory neuron specification and axonal projection into the spinal cord. Plays a role in TNFSF11-mediated terminal osteoclast differentiation. Negatively regulates its own expression interacting directly with a highly conserved autoregulatory domain surrounding the transcription initiation site. Its function is as follows. Able to act as transcription factor, cannot regulate the expression of the same subset of genes than isoform 1. Does not have anitapoptotic effect on neuronal cells. In Rattus norvegicus (Rat), this protein is POU domain, class 4, transcription factor 1 (Pou4f1).